The sequence spans 335 residues: Nucleoid-associated protein PP_0973 (335 aa).

Belongs to the YejK family.

The protein localises to the cytoplasm. The protein resides in the nucleoid. The polypeptide is Nucleoid-associated protein PP_0973 (Pseudomonas putida (strain ATCC 47054 / DSM 6125 / CFBP 8728 / NCIMB 11950 / KT2440)).